The sequence spans 243 residues: Small ribosomal subunit protein uS5 (243 aa).

Basic and acidic residues-rich tracts occupy residues M1–K21 and L34–G46. A disordered region spans residues M1–P85. The S5 DRBM domain maps to F89–V152.

The protein belongs to the universal ribosomal protein uS5 family. As to quaternary structure, part of the 30S ribosomal subunit. Contacts proteins S4 and S8.

Functionally, with S4 and S12 plays an important role in translational accuracy. Located at the back of the 30S subunit body where it stabilizes the conformation of the head with respect to the body. In Mycoplasma mobile (strain ATCC 43663 / 163K / NCTC 11711) (Mesomycoplasma mobile), this protein is Small ribosomal subunit protein uS5.